Consider the following 875-residue polypeptide: Ectonucleotide pyrophosphatase/phosphodiesterase family member 3 (875 aa).

Residues 1–11 (MDSRLALATEE) are Cytoplasmic-facing. The helical; Signal-anchor for type II membrane protein transmembrane segment at 12-30 (PIKKDSLKRYKILCAVLLA) threads the bilayer. Residues 31–875 (LLVIVSLGLG…TYLPTFETII (845 aa)) are Extracellular-facing. SMB domains are found at residues 51-94 (HIGS…VKST) and 95-139 (QIWT…GEVP). 10 disulfide bridges follow: cysteine 55/cysteine 72, cysteine 59/cysteine 90, cysteine 70/cysteine 83, cysteine 76/cysteine 82, cysteine 99/cysteine 116, cysteine 104/cysteine 134, cysteine 114/cysteine 127, cysteine 120/cysteine 126, cysteine 145/cysteine 191, and cysteine 153/cysteine 365. A Cell attachment site motif is present at residues 79–81 (RGD). Residues 161–545 (PVILFSMDGF…HGSLNHLLKA (385 aa)) are phosphodiesterase. Aspartate 168 lines the Zn(2+) pocket. Residue lysine 205 coordinates ATP. Threonine 206 provides a ligand contact to Zn(2+). The active-site Nucleophile is threonine 206. Asparagine 227 lines the ATP pocket. Residue asparagine 237 is glycosylated (N-linked (GlcNAc...) asparagine). Residue aspartate 276 coordinates ATP. N-linked (GlcNAc...) asparagine glycans are attached at residues asparagine 280 and asparagine 289. Residue tyrosine 290 participates in ATP binding. Zn(2+) is bound by residues aspartate 326, histidine 330, aspartate 373, and histidine 374. Cystine bridges form between cysteine 381–cysteine 478, cysteine 429–cysteine 818, cysteine 562–cysteine 623, cysteine 575–cysteine 679, cysteine 577–cysteine 664, and cysteine 787–cysteine 797. Position 483 (histidine 483) interacts with Zn(2+). 4 N-linked (GlcNAc...) asparagine glycosylation sites follow: asparagine 533, asparagine 574, asparagine 594, and asparagine 702. The tract at residues 582–875 (TSGQEEQVNQ…TYLPTFETII (294 aa)) is nuclease. Residues aspartate 752, asparagine 754, aspartate 756, histidine 758, and aspartate 760 each coordinate Ca(2+). Asparagine 789 carries N-linked (GlcNAc...) asparagine glycosylation.

The protein belongs to the nucleotide pyrophosphatase/phosphodiesterase family. In terms of assembly, monomer and homodimer. It depends on Zn(2+) as a cofactor. In terms of processing, the N-terminal is blocked. Post-translationally, N-glycosylated. N-glycosylation is necessary for normal transport to the cell membrane, but is not the apical targeting signal. Detected in intestinal epithelium and liver (at protein level).

It localises to the cell membrane. Its subcellular location is the apical cell membrane. It is found in the secreted. It carries out the reaction Hydrolytically removes 5'-nucleotides successively from the 3'-hydroxy termini of 3'-hydroxy-terminated oligonucleotides.. The catalysed reaction is a ribonucleoside 5'-triphosphate + H2O = a ribonucleoside 5'-phosphate + diphosphate + H(+). The enzyme catalyses ATP + H2O = AMP + diphosphate + H(+). It catalyses the reaction CTP + H2O = CMP + diphosphate + H(+). It carries out the reaction GTP + H2O = GMP + diphosphate + H(+). The catalysed reaction is UTP + H2O = UMP + diphosphate + H(+). The enzyme catalyses UDP-N-acetyl-alpha-D-glucosamine + H2O = N-acetyl-alpha-D-glucosamine 1-phosphate + UMP + 2 H(+). It catalyses the reaction P(1),P(3)-bis(5'-adenosyl) triphosphate + H2O = AMP + ADP + 2 H(+). It carries out the reaction P(1),P(4)-bis(5'-adenosyl) tetraphosphate + H2O = AMP + ATP + 2 H(+). The catalysed reaction is P(1),P(5)-bis(5'-adenosyl) pentaphosphate + H2O = adenosine 5'-tetraphosphate + AMP + 2 H(+). The enzyme catalyses P(1),P(4)-bis(5'-guanosyl) tetraphosphate + H2O = GMP + GTP + 2 H(+). Hydrolase that metabolizes extracellular nucleotides, including ATP, GTP, UTP and CTP. Limits mast cells and basophils response during inflammation and during the chronic phases of allergic responses by eliminating extracellular ATP, a signaling molecule activating these cells in an autocrine manner. Metabolizes extracellular ATP in the lumen of the small intestine, and thereby prevents ATP-induced apoptosis of intestinal plasmacytoid dendritic cells. Has a broad specificity and can also hydrolyze UDP-GlcNAc into UMP and GlcNAc-1-phosphate and potentially several other intracellular nucleotide sugars, including UDP-GalNAc, CMP-NeuAc, GDP-Fuc, and UDP-GlcA. Thereby, could modulate glycan biosynthesis and protein glycosylation. Can hydrolyze extracellular dinucleoside polyphosphates, including the vasoactive adenosine polyphosphates as well. In addition, displays an alkaline phosphodiesterase activity in vitro. The protein is Ectonucleotide pyrophosphatase/phosphodiesterase family member 3 of Rattus norvegicus (Rat).